The following is a 423-amino-acid chain: Gamma-glutamyl phosphate reductase (423 aa).

It belongs to the gamma-glutamyl phosphate reductase family.

It is found in the cytoplasm. It catalyses the reaction L-glutamate 5-semialdehyde + phosphate + NADP(+) = L-glutamyl 5-phosphate + NADPH + H(+). The protein operates within amino-acid biosynthesis; L-proline biosynthesis; L-glutamate 5-semialdehyde from L-glutamate: step 2/2. Functionally, catalyzes the NADPH-dependent reduction of L-glutamate 5-phosphate into L-glutamate 5-semialdehyde and phosphate. The product spontaneously undergoes cyclization to form 1-pyrroline-5-carboxylate. The chain is Gamma-glutamyl phosphate reductase from Burkholderia vietnamiensis (strain G4 / LMG 22486) (Burkholderia cepacia (strain R1808)).